Here is a 498-residue protein sequence, read N- to C-terminus: Archaemetzincin-1 (498 aa).

Histidine 261 is a binding site for Zn(2+). Glutamate 262 functions as the Proton acceptor in the catalytic mechanism. The Zn(2+) site is built by histidine 265, cysteine 272, cysteine 277, cysteine 296, and cysteine 299. The interval 332 to 381 (QEAGEPSVWEDTPPASADSGMCCESDSEPGTSVSEPLTPDAGSHTFASGP) is disordered.

It belongs to the peptidase M54 family. It depends on Zn(2+) as a cofactor.

Probable zinc metalloprotease. In Homo sapiens (Human), this protein is Archaemetzincin-1 (AMZ1).